A 208-amino-acid chain; its full sequence is MNYPNGKPYSKNKPLDGRKSSPFSSNIEYGGRGMTLEKDIEQSNTFYLKSGIAVIHKKPTPVQIVNVHYPKRSKAVINEAYFRTPSTTDYNGVYNGYYIDFEAKETKNKTSFPLNNIHAHQVEHMKNTYHQKGIVFLMIRFKSLDEVYLLPYSKFEKYWQRYINNIKKSITVEEIRKNGYHIPYQYQPRLNYLKAVDKLILDESEDRV.

The segment at 1–28 (MNYPNGKPYSKNKPLDGRKSSPFSSNIE) is disordered. Residues Thr-87, Asp-89, Glu-102, and Gln-121 each coordinate Mg(2+).

Belongs to the RecU family. Requires Mg(2+) as cofactor.

Its subcellular location is the cytoplasm. It carries out the reaction Endonucleolytic cleavage at a junction such as a reciprocal single-stranded crossover between two homologous DNA duplexes (Holliday junction).. In terms of biological role, endonuclease that resolves Holliday junction intermediates in genetic recombination. Cleaves mobile four-strand junctions by introducing symmetrical nicks in paired strands. Promotes annealing of linear ssDNA with homologous dsDNA. Required for DNA repair, homologous recombination and chromosome segregation. In Staphylococcus epidermidis (strain ATCC 12228 / FDA PCI 1200), this protein is Holliday junction resolvase RecU.